The sequence spans 361 residues: tRNA-specific 2-thiouridylase MnmA (361 aa).

ATP-binding positions include 8–15 and Met34; that span reads GMSGGVDS. The interval 94 to 96 is interaction with target base in tRNA; sequence NPD. Cys99 serves as the catalytic Nucleophile. Residues Cys99 and Cys195 are joined by a disulfide bond. Gly123 contacts ATP. Residues 145-147 form an interaction with tRNA region; it reads KDQ. The active-site Cysteine persulfide intermediate is the Cys195. Residues 307-308 are interaction with tRNA; that stretch reads RY.

It belongs to the MnmA/TRMU family.

It localises to the cytoplasm. It catalyses the reaction S-sulfanyl-L-cysteinyl-[protein] + uridine(34) in tRNA + AH2 + ATP = 2-thiouridine(34) in tRNA + L-cysteinyl-[protein] + A + AMP + diphosphate + H(+). Functionally, catalyzes the 2-thiolation of uridine at the wobble position (U34) of tRNA, leading to the formation of s(2)U34. This is tRNA-specific 2-thiouridylase MnmA from Legionella pneumophila subsp. pneumophila (strain Philadelphia 1 / ATCC 33152 / DSM 7513).